Consider the following 93-residue polypeptide: Acylphosphatase (93 aa).

The Acylphosphatase-like domain occupies 7 to 93 (CLKAVISGKV…GEFRAFEILR (87 aa)). Catalysis depends on residues Arg22 and Asn40.

Belongs to the acylphosphatase family.

It catalyses the reaction an acyl phosphate + H2O = a carboxylate + phosphate + H(+). This is Acylphosphatase (acyP) from Acaryochloris marina (strain MBIC 11017).